Here is an 83-residue protein sequence, read N- to C-terminus: Keratin-associated protein 21-2 (83 aa).

Interacts with hair keratins.

Functionally, in the hair cortex, hair keratin intermediate filaments are embedded in an interfilamentous matrix, consisting of hair keratin-associated proteins (KRTAP), which are essential for the formation of a rigid and resistant hair shaft through their extensive disulfide bond cross-linking with abundant cysteine residues of hair keratins. The matrix proteins include the high-sulfur and high-glycine-tyrosine keratins. This Homo sapiens (Human) protein is Keratin-associated protein 21-2 (KRTAP21-2).